The primary structure comprises 626 residues: Transketolase-like protein 2 (626 aa).

Residue His37 coordinates substrate. Thiamine diphosphate is bound by residues Ser40, His77, and 123–125 (GSL). Asp155 contributes to the Mg(2+) binding site. The thiamine diphosphate site is built by Gly156 and Asn185. Positions 185 and 187 each coordinate Mg(2+). Lys247 and His261 together coordinate thiamine diphosphate. Substrate-binding residues include His261 and Ser348. Residues Glu369 and Phe395 each contribute to the thiamine diphosphate site. The active-site Proton donor is the Glu369. 2 residues coordinate substrate: His419 and Asp427. Gln431 is a binding site for thiamine diphosphate. Arg477 is a substrate binding site.

Belongs to the transketolase family. As to quaternary structure, homodimer. Mg(2+) serves as cofactor. Requires Ca(2+) as cofactor. Mn(2+) is required as a cofactor. The cofactor is Co(2+). It depends on thiamine diphosphate as a cofactor.

The catalysed reaction is D-sedoheptulose 7-phosphate + D-glyceraldehyde 3-phosphate = aldehydo-D-ribose 5-phosphate + D-xylulose 5-phosphate. In terms of biological role, plays an essential role in total transketolase activity and cell proliferation in cancer cells; after transfection with anti-TKTL1 siRNA, total transketolase activity dramatically decreases and proliferation was significantly inhibited in cancer cells. Plays a pivotal role in carcinogenesis. This is Transketolase-like protein 2 (TKTL2) from Bos taurus (Bovine).